A 533-amino-acid polypeptide reads, in one-letter code: Metal transporter nramp1 homolog (533 aa).

The interval 1–33 (MTPRIESEESAPLVNKNNNNNNDNNNNNNVDEE) is disordered. The Cytoplasmic segment spans residues 1-68 (MTPRIESEES…PNIDKPDSKW (68 aa)). Residues 14 to 29 (VNKNNNNNNDNNNNNN) show a composition bias toward low complexity. A helical membrane pass occupies residues 69–89 (INFKTLWAFTGPGFLMSIAYL). Over 90-101 (DPGNLESDIQAG) the chain is Extracellular. Residues 102–122 (AMAGYQLLWVLFWSTVIGFWL) traverse the membrane as a helical segment. Residues 123–158 (QMLASRLGVVTGKHLAEHCREQYPKTPRLLLWLMTE) are Cytoplasmic-facing. The helical transmembrane segment at 159–179 (LAIIGSDIQEVIGTAIALQIL) threads the bilayer. Residues 180-182 (SNG) are Extracellular-facing. The chain crosses the membrane as a helical span at residues 183-203 (HIPLWAGVLFTAADTFTFLFL). At 204-212 (EKYGIRKLE) the chain is on the cytoplasmic side. The chain crosses the membrane as a helical span at residues 213-233 (AFFCSLIAIMAISFGVEYIIS). Residues 234 to 256 (KPDQIEVVKGVFIPLCSQNNISQ) are Extracellular-facing. The N-linked (GlcNAc...) asparagine glycan is linked to N253. A helical transmembrane segment spans residues 257–277 (AVGILGAVVMPHNIYLHSALV). At 278 to 302 (QSREIDRKSETQVKIANKYNRLESA) the chain is on the cytoplasmic side. A helical transmembrane segment spans residues 303-323 (FALIISFIINLLLVSVFAKGF). At 324 to 348 (YGETTEIGLSSAADFLMDKYGKVAK) the chain is on the extracellular side. The chain crosses the membrane as a helical span at residues 349 to 368 (YIWAIGLFSAGQCSTMTGTY). The Cytoplasmic portion of the chain corresponds to 369–387 (SGQFVMEGFLKLKIAPWKR). Residues 388 to 408 (LLITRCTAIVPAMVVAILSTS) form a helical membrane-spanning segment. At 409-415 (HLDSLDQ) the chain is on the extracellular side. A helical transmembrane segment spans residues 416–436 (WLNILQSIQLPFAVVPVLLFT). Residues 437–457 (SSEKIMGSKFKNHWLNNQFVR) are Cytoplasmic-facing. Residues 458-478 (FLSLLIIAINIYLIITFSMQI) form a helical membrane-spanning segment. At 479–481 (SES) the chain is on the extracellular side. Residues 482-502 (AWMISIVSISFFFYFIFIVYL) traverse the membrane as a helical segment. Residues 503–533 (SMGQENFNSMTKKIKNLFNNNSNQTYNNINY) lie on the Cytoplasmic side of the membrane.

This sequence belongs to the NRAMP family.

It is found in the membrane. In terms of biological role, depletes iron from the phagolysosome in an ATP-dependent process. May rather act as a symporter of protons and metal cations in an ATP-dependent process. Nramp1 overexpression protected cells from L.pneumophila infection. The polypeptide is Metal transporter nramp1 homolog (nramp1) (Dictyostelium discoideum (Social amoeba)).